The sequence spans 133 residues: MGKNDKKGADKGGKAKGGDKGKDAKDTKDSGSGGKAKGAQSINVRHILCEKHAKKEEALAKLNDGVKFDEVAREYSEDKARQGGSLGWKTKGSLDPKFEEVAFALETSTTNSPKFVEVKTGFGYHIIMVEGRK.

The span at 1–29 (MGKNDKKGADKGGKAKGGDKGKDAKDTKD) shows a compositional bias: basic and acidic residues. Positions 1-42 (MGKNDKKGADKGGKAKGGDKGKDAKDTKDSGSGGKAKGAQSI) are disordered. Residues 39-131 (AQSINVRHIL…FGYHIIMVEG (93 aa)) enclose the PpiC domain.

Belongs to the PpiC/parvulin rotamase family. PIN4 subfamily.

It catalyses the reaction [protein]-peptidylproline (omega=180) = [protein]-peptidylproline (omega=0). Functionally, PPIases accelerate the folding of proteins. It catalyzes the cis-trans isomerization of proline imidic peptide bonds in oligopeptides. The chain is Peptidyl-prolyl cis-trans isomerase PIN4 (PIN4) from Gibberella zeae (strain ATCC MYA-4620 / CBS 123657 / FGSC 9075 / NRRL 31084 / PH-1) (Wheat head blight fungus).